Here is a 409-residue protein sequence, read N- to C-terminus: Multifunctional CCA protein (409 aa).

Residues Gly8 and Arg11 each contribute to the ATP site. Positions 8 and 11 each coordinate CTP. Residues Asp21 and Asp23 each coordinate Mg(2+). ATP is bound by residues Arg91, Arg137, and Arg140. CTP contacts are provided by Arg91, Arg137, and Arg140. In terms of domain architecture, HD spans 228–329 (TGAHTLSVLL…LELLQSFDVF (102 aa)).

This sequence belongs to the tRNA nucleotidyltransferase/poly(A) polymerase family. Bacterial CCA-adding enzyme type 1 subfamily. Monomer. Can also form homodimers and oligomers. The cofactor is Mg(2+). It depends on Ni(2+) as a cofactor.

It catalyses the reaction a tRNA precursor + 2 CTP + ATP = a tRNA with a 3' CCA end + 3 diphosphate. It carries out the reaction a tRNA with a 3' CCA end + 2 CTP + ATP = a tRNA with a 3' CCACCA end + 3 diphosphate. Functionally, catalyzes the addition and repair of the essential 3'-terminal CCA sequence in tRNAs without using a nucleic acid template. Adds these three nucleotides in the order of C, C, and A to the tRNA nucleotide-73, using CTP and ATP as substrates and producing inorganic pyrophosphate. tRNA 3'-terminal CCA addition is required both for tRNA processing and repair. Also involved in tRNA surveillance by mediating tandem CCA addition to generate a CCACCA at the 3' terminus of unstable tRNAs. While stable tRNAs receive only 3'-terminal CCA, unstable tRNAs are marked with CCACCA and rapidly degraded. This is Multifunctional CCA protein from Pseudomonas fluorescens (strain ATCC BAA-477 / NRRL B-23932 / Pf-5).